A 524-amino-acid polypeptide reads, in one-letter code: Solute carrier family 35 member F5 (524 aa).

Helical transmembrane passes span 69 to 89 (MALGIVILLLVDVIWVASSEL) and 101 to 121 (FFSTFAKTSMFVLYLLGFIIW). S207 is modified (phosphoserine). Helical transmembrane passes span 244-264 (ISFFFCFVWFLANLSYQEALS), 269-289 (AIVNILSSTSGLFTLILAAVF), 297-317 (FTLSKLLAVILSIGGVVLVNL), 328-348 (TIGSIWSLAGAMFYAVYIVMI), 362-382 (MFFGFVGLFNLLLLWPGFFLL), 396-416 (VVLLCIIINGLIGTVLSEFLW), 421-441 (FLTSSLIGTLALSLTIPLSII), and 453-473 (WLFFAGAIPVFFSFFIVTLLC). The EamA domain maps to 253–317 (FLANLSYQEA…SIGGVVLVNL (65 aa)).

This sequence belongs to the SLC35F solute transporter family.

It localises to the membrane. Its function is as follows. Putative solute transporter. The chain is Solute carrier family 35 member F5 (Slc35f5) from Mus musculus (Mouse).